A 133-amino-acid chain; its full sequence is Adenosine 5'-monophosphoramidase hnt1 (133 aa).

An HIT domain is found at 4–107; sequence IFCKIVKGDI…IPKPNEEYGL (104 aa). AMP is bound by residues 29–30, Asn81, 87–89, and 94–96; these read DI, HQF, and HFH. The short motif at 92–96 is the Histidine triad motif element; that stretch reads HVHFH. His94 functions as the Tele-AMP-histidine intermediate in the catalytic mechanism.

This sequence belongs to the HINT family. In terms of assembly, homodimer. Mg(2+) is required as a cofactor.

The protein localises to the nucleus. It carries out the reaction adenosine 5'-phosphoramidate + H2O = AMP + NH4(+). Its function is as follows. Hydrolyzes adenosine 5'-monophosphoramidate substrates such as AMP-morpholidate, AMP-N-alanine methyl ester, AMP-alpha-acetyl lysine methyl ester and AMP-NH2. This Schizosaccharomyces pombe (strain 972 / ATCC 24843) (Fission yeast) protein is Adenosine 5'-monophosphoramidase hnt1 (hnt1).